The following is a 376-amino-acid chain: Homoserine dehydrogenase (376 aa).

Residues Asn17 and Ile18 each contribute to the NADP(+) site. Ile18 serves as a coordination point for NAD(+). Ile18, Lys67, Thr99, and Lys123 together coordinate NADPH. Residues Thr99 and Lys123 each contribute to the NADP(+) site. Position 99 (Thr99) interacts with NAD(+). Residues Glu150, Val153, Ala155, and Leu157 each coordinate Na(+). Phosphoserine is present on Ser201. Residues Gly213 and Glu216 each coordinate NADP(+). Glu216 and Asp227 together coordinate L-homoserine. Residue Lys231 is the Proton donor of the active site. Gly349 serves as a coordination point for NADP(+). Gly349 is an NAD(+) binding site. Gly349 provides a ligand contact to NADPH.

It belongs to the homoserine dehydrogenase family. A metal cation serves as cofactor.

It catalyses the reaction L-homoserine + NADP(+) = L-aspartate 4-semialdehyde + NADPH + H(+). The enzyme catalyses L-homoserine + NAD(+) = L-aspartate 4-semialdehyde + NADH + H(+). It functions in the pathway amino-acid biosynthesis; L-methionine biosynthesis via de novo pathway; L-homoserine from L-aspartate: step 3/3. The protein operates within amino-acid biosynthesis; L-threonine biosynthesis; L-threonine from L-aspartate: step 3/5. Its function is as follows. Catalyzes the conversion of L-aspartate-beta-semialdehyde (L-Asa) to L-homoserine (L-Hse), the third step in the biosynthesis of amino acids that derive from aspartate (the aspartate family of amino acids), including methioinine and threonine, the latter of which is a precursor to isoleucine; production of homoserine leads to a branch-point in the pathway as it can either be O-phosphorylated for processing to threonine, or O-acylated for processing to methionine. The chain is Homoserine dehydrogenase from Schizosaccharomyces pombe (strain 972 / ATCC 24843) (Fission yeast).